A 336-amino-acid chain; its full sequence is Dihydroorotate dehydrogenase (quinone) (336 aa).

Residues 62-66 (AGLDK) and Thr-86 each bind FMN. A substrate-binding site is contributed by Lys-66. Substrate is bound at residue 111–115 (NRMGF). The FMN site is built by Asn-139 and Asn-172. Asn-172 is a binding site for substrate. The Nucleophile role is filled by Ser-175. Asn-177 is a substrate binding site. FMN contacts are provided by Lys-217 and Thr-245. 246–247 (NT) contributes to the substrate binding site. FMN contacts are provided by residues Gly-268, Gly-297, and 318 to 319 (FS).

The protein belongs to the dihydroorotate dehydrogenase family. Type 2 subfamily. Monomer. FMN is required as a cofactor.

It is found in the cell membrane. The enzyme catalyses (S)-dihydroorotate + a quinone = orotate + a quinol. It participates in pyrimidine metabolism; UMP biosynthesis via de novo pathway; orotate from (S)-dihydroorotate (quinone route): step 1/1. Functionally, catalyzes the conversion of dihydroorotate to orotate with quinone as electron acceptor. This chain is Dihydroorotate dehydrogenase (quinone), found in Photorhabdus laumondii subsp. laumondii (strain DSM 15139 / CIP 105565 / TT01) (Photorhabdus luminescens subsp. laumondii).